The primary structure comprises 688 residues: Eukaryotic translation initiation factor 3 subunit B (688 aa).

Positions 1 to 32 are disordered; the sequence is MAKKKGENYDSDGGDDQDYDEEPNFDDPEGFV. A compositionally biased stretch (acidic residues) spans 9–32; that stretch reads YDSDGGDDQDYDEEPNFDDPEGFV. One can recognise an RRM domain in the interval 57 to 141; it reads NVIVVDNIPV…HTLLVNLFSD (85 aa). 6 WD repeats span residues 208–246, 247–287, 291–329, 332–367, 440–482, and 527–572; these read RDRF…KINK, FPHS…EKRS, DGTS…LLDK, IKVQ…TLLE, EVKE…EPTM, and GDHF…KRVN. The stretch at 613 to 642 forms a coiled coil; it reads RIRMTRASKELLEKRAKLREQFVEYRTKRV.

This sequence belongs to the eIF-3 subunit B family. As to quaternary structure, component of the eukaryotic translation initiation factor 3 (eIF-3) complex.

It localises to the cytoplasm. In terms of biological role, RNA-binding component of the eukaryotic translation initiation factor 3 (eIF-3) complex, which is involved in protein synthesis of a specialized repertoire of mRNAs and, together with other initiation factors, stimulates binding of mRNA and methionyl-tRNAi to the 40S ribosome. The eIF-3 complex specifically targets and initiates translation of a subset of mRNAs involved in cell proliferation. The sequence is that of Eukaryotic translation initiation factor 3 subunit B from Aedes aegypti (Yellowfever mosquito).